Reading from the N-terminus, the 330-residue chain is Putative F-box protein At1g57690 (330 aa).

Residues 25-72 (VDIISSLPDVILQHILFSFQTKYAIRTSVLSKRWRHEADAINKALSQY) enclose the F-box domain.

The polypeptide is Putative F-box protein At1g57690 (Arabidopsis thaliana (Mouse-ear cress)).